Reading from the N-terminus, the 471-residue chain is Ammonium transporter Rh type B (471 aa).

The Cytoplasmic portion of the chain corresponds to 1-13 (MAGSPSRAAGRRL). Residues 14-33 (QLPLLSFLQGATAVLFAVFV) form a helical membrane-spanning segment. Over 34-60 (RYNHKTDAALWHRGNHSNADNEFYFRY) the chain is Extracellular. N-linked (GlcNAc...) asparagine glycosylation occurs at N48. The chain crosses the membrane as a helical span at residues 61-81 (PSFQDVHAMVFVGFGFLMVFL). The Cytoplasmic portion of the chain corresponds to 82–85 (QRYG). Residues 86-106 (FSSVGFTFLLAAFALQWSTLV) traverse the membrane as a helical segment. Residues 107–123 (QGFLHSFHGGHIHVGVE) lie on the Extracellular side of the membrane. The helical transmembrane segment at 124–144 (SMINADFCAGAVLISFGAVLG) threads the bilayer. At 145–148 (KTGP) the chain is on the cytoplasmic side. Residues 149–169 (AQLLLMALLEVVLFGINEFVL) traverse the membrane as a helical segment. Topologically, residues 170 to 177 (LHLLGVRD) are extracellular. Residues 178–200 (AGGSMTIHTFGAYFGLVLSQVLY) form a helical membrane-spanning segment. At 201–217 (RPQLEKSKHRQGLYHSD) the chain is on the cytoplasmic side. The chain crosses the membrane as a helical span at residues 218–238 (LFAMIGTIFLWIFWPSFNAAL). Residues 239–249 (TSLGAGQHRTA) are Extracellular-facing. Residues 250–270 (LNTYYSLAASTLGTFALSALV) traverse the membrane as a helical segment. Residues 271–280 (GEDGRLDMVH) are Cytoplasmic-facing. A helical membrane pass occupies residues 281–301 (IQNAALAGRVVVGTSSEMMLT). Residue P302 is a topological domain, extracellular. The chain crosses the membrane as a helical span at residues 303–323 (FGALAAGFLAGTVSTLGYKFF). Residues 324–344 (TPILESKFKVQDTCGVHNLHG) are Cytoplasmic-facing. Residues 345–365 (MPGVLGVLLGVLVAGLATHEA) form a helical membrane-spanning segment. Residues 366 to 391 (YGDGLESVFPLIAEGQRSATSQAMYQ) are Extracellular-facing. Residues 392–412 (LFGLFVTLMFASVGGGLGGLL) form a helical membrane-spanning segment. Residues 413–471 (LKLPFLDSPPDSQCYEDQVHWQAPGATLSPLPTPAFQVPGEHEDKAQRPLRVEEADTQA) lie on the Cytoplasmic side of the membrane. Residues 414–422 (KLPFLDSPP) are interaction with ANK3. The short motif at 427–430 (YEDQ) is the Basolateral sorting signal element. The disordered stretch occupies residues 437–471 (GATLSPLPTPAFQVPGEHEDKAQRPLRVEEADTQA). A compositionally biased stretch (basic and acidic residues) spans 452-471 (GEHEDKAQRPLRVEEADTQA).

Belongs to the ammonium transporter (TC 2.A.49) family. Rh subfamily. Interacts (via C-terminus) with ANK2 and ANK3; required for targeting to the basolateral membrane. Post-translationally, N-glycosylated.

The protein resides in the cell membrane. It is found in the basolateral cell membrane. It catalyses the reaction NH4(+)(in) = NH4(+)(out). It carries out the reaction methylamine(out) = methylamine(in). The catalysed reaction is CO2(out) = CO2(in). Ammonium transporter involved in the maintenance of acid-base homeostasis. Transports ammonium and its related derivative methylammonium across the basolateral plasma membrane of epithelial cells likely contributing to renal transepithelial ammonia transport and ammonia metabolism. May transport either NH4(+) or NH3 ammonia species predominantly mediating an electrogenic NH4(+) transport. May act as a CO2 channel providing for renal acid secretion. This chain is Ammonium transporter Rh type B (RHBG), found in Pongo pygmaeus (Bornean orangutan).